We begin with the raw amino-acid sequence, 485 residues long: MASIAHCSGGLVGAGNFDFILGGSDPVGRHGLMELQPWHWCCLPLEGRTGSEIFSQLFGHQGIATLLESPYPASPDHPHLGRYSLCAGQPRKGRLWTPKPEEIFSFLNQLCPCNHDVNLTKNIPEHLPFHGGWLGWLGYDTAWAIEKLPYSKADDLPFPVAYWYEPENFVILDHQEQLLWLATTDQEKIKFFQTQLADKINSVSSPQVPPLNLTYTTDQDQYETMVNQAKQYIKAGDIFQANLTLRFIAKTEQKLNSWQVYQHLQTINPSPFASYWRSPWGDVVSCSPERLVKLEGNVAQTRPIAGTRARGKNLAEDEQLLQELLVNTKELAEHIMLVDLERNDLGRVCTWGTVEVDELLAIERYSHVSHLVSNVKGILQPDKTGVDLVKALFPGGTITGCPKIRCLEIIEELEPVRRSLFYGSCGYWDQRGNLDLNILIRTLLFTSGQVTGQVGAGIVADSDPAKEWLESLQKAKALLAALEGL.

L-tryptophan is bound by residues serine 69 and 271–273 (PFA). 306–307 (GT) serves as a coordination point for chorismate. Glutamate 333 provides a ligand contact to Mg(2+). Residues arginine 441, 455-457 (GAG), and glycine 457 contribute to the chorismate site. Glutamate 470 lines the Mg(2+) pocket.

It belongs to the anthranilate synthase component I family. Tetramer of two components I and two components II. The cofactor is Mg(2+).

The catalysed reaction is chorismate + L-glutamine = anthranilate + pyruvate + L-glutamate + H(+). The protein operates within amino-acid biosynthesis; L-tryptophan biosynthesis; L-tryptophan from chorismate: step 1/5. The chain is Anthranilate synthase component I-like protein (trpE2) from Synechocystis sp. (strain ATCC 27184 / PCC 6803 / Kazusa).